The following is a 326-amino-acid chain: Target of rapamycin complex subunit LST8 (326 aa).

The residue at position 1 (Met-1) is an N-acetylmethionine. WD repeat units lie at residues 1-37, 40-80, 83-122, 126-165, and 168-207; these read MNTT…CTRT, HQDS…PIIS, GVSK…LQCQ, QVNA…NEQL, and EPES…GDDV. The residue at position 51 (Thr-51) is a Phosphothreonine. A Glycyl lysine isopeptide (Lys-Gly) (interchain with G-Cter in SUMO3) cross-link involves residue Lys-86. Residues Lys-215, Lys-245, and Lys-261 each participate in a glycyl lysine isopeptide (Lys-Gly) (interchain with G-Cter in SUMO3) cross-link. The stretch at 218-257 is one WD 6 repeat; it reads AHTRYALQCRFSPDSTLLATCSADQTCKIWRTSNFSLMTE. Residues 268–309 form a WD 7 repeat; that stretch reads SSRGWMWGCAFSGDSQYIVTASSDNLARLWCVETGEIKREYG. Lys-305 participates in a covalent cross-link: Glycyl lysine isopeptide (Lys-Gly) (interchain with G-Cter in SUMO3); alternate. Glycyl lysine isopeptide (Lys-Gly) (interchain with G-Cter in ubiquitin); alternate cross-links involve residues Lys-305 and Lys-313. Lys-313 participates in a covalent cross-link: Glycyl lysine isopeptide (Lys-Gly) (interchain with G-Cter in SUMO1); alternate.

Belongs to the WD repeat LST8 family. Part of the mechanistic target of rapamycin complex 1 (mTORC1) which contains MTOR, MLST8 and RPTOR. mTORC1 associates with AKT1S1/PRAS40, which inhibits its activity. mTORC1 binds to and is inhibited by FKBP12-rapamycin. Within mTORC1, interacts directly with MTOR and RPTOR. Component of the mechanistic target of rapamycin complex 2 (mTORC2), consisting in two heterotretramers composed of MTOR, MLST8, RICTOR and MAPKAP1/SIN1. Contrary to mTORC1, mTORC2 does not bind to and is not sensitive to FKBP12-rapamycin. mTORC1 and mTORC2 associate with DEPTOR, which regulates their activity. Interacts with RHEB. Interacts with MEAK7. Interacts with SIK3. Interacts with SLC38A7; this interaction promotes the recruitment of mTORC1 to the lysosome and its subsequent activation. Post-translationally, phosphorylation at Thr-51 by CDK1 promotes ubiquitination by the SCF(FBXW7) complex, followed by degradation. Ubiquitination by the SCF(FBXW7) and SCF(FBXW11) complexes following phosphorylation at Thr-51 by CDK1, leads to its degradation by the proteasome. Ubiquitination at Lys-305 and Lys-313 by TRAF2 via 'Lys-63'-linked polyubiquitin chains inhibits formation of the mTORC2 complex, while promoting formation of the mTORC1 complex: ubiquitination disrupts the interaction between MLST8 and MAPKAP1/SIN1 to favor mTORC1 assembly. Deubiquitination at Lys-305 and Lys-313 by OTUD7B promotes MLST8 interaction with MAPKAP1/SIN1, facilitating mTORC2 assembly. In terms of processing, sumoylation with SUMO1, SUMO2 and SUMO3 promotes assembly of both mTORC1 and mTORC2 complexes.

It localises to the lysosome membrane. It is found in the cytoplasm. Subunit of both mTORC1 and mTORC2, which regulates cell growth and survival in response to nutrient and hormonal signals. mTORC1 is activated in response to growth factors or amino acids. In response to nutrients, mTORC1 is recruited to the lysosome membrane and promotes protein, lipid and nucleotide synthesis by phosphorylating several substrates, such as ribosomal protein S6 kinase (RPS6KB1 and RPS6KB2) and EIF4EBP1 (4E-BP1). In the same time, it inhibits catabolic pathways by phosphorylating the autophagy initiation components ULK1 and ATG13, as well as transcription factor TFEB, a master regulators of lysosomal biogenesis and autophagy. The mTORC1 complex is inhibited in response to starvation and amino acid depletion. Within mTORC1, MLST8 interacts directly with MTOR and enhances its kinase activity. In nutrient-poor conditions, stabilizes the MTOR-RPTOR interaction and favors RPTOR-mediated inhibition of MTOR activity. As part of the mTORC2 complex, transduces signals from growth factors to pathways involved in proliferation, cytoskeletal organization, lipogenesis and anabolic output. mTORC2 is also activated by growth factors, but seems to be nutrient-insensitive. In response to growth factors, mTORC2 phosphorylates and activates AGC protein kinase family members, including AKT (AKT1, AKT2 and AKT3), PKC (PRKCA, PRKCB and PRKCE) and SGK1. mTORC2 functions upstream of Rho GTPases to regulate the actin cytoskeleton, probably by activating one or more Rho-type guanine nucleotide exchange factors. mTORC2 promotes the serum-induced formation of stress-fibers or F-actin. mTORC2 plays a critical role in AKT1 activation by mediating phosphorylation of different sites depending on the context, such as 'Thr-450', 'Ser-473', 'Ser-477' or 'Thr-479', facilitating the phosphorylation of the activation loop of AKT1 on 'Thr-308' by PDPK1/PDK1 which is a prerequisite for full activation. mTORC2 regulates the phosphorylation of SGK1 at 'Ser-422'. mTORC2 also modulates the phosphorylation of PRKCA on 'Ser-657'. Within mTORC2, MLST8 acts as a bridge between MAPKAP1/SIN1 and MTOR. This is Target of rapamycin complex subunit LST8 from Mus musculus (Mouse).